The sequence spans 1906 residues: A disintegrin and metalloproteinase with thrombospondin motifs 20 (1906 aa).

The signal sequence occupies residues 1-26 (MRVAKWLTGLLCPISLLLTGSWEVRF). Residues 27–249 (HPRQEALVKT…RSQLHSRNKR (223 aa)) constitute a propeptide that is removed on maturation. Residues Asn-92 and Asn-221 are each glycosylated (N-linked (GlcNAc...) asparagine). The tract at residues 201–222 (PCEVSENQMEKTALPSQSSRNT) is disordered. A Peptidase M12B domain is found at 255–464 (RYVEVMVTAD…GHGECLLDKP (210 aa)). Disulfide bonds link Cys-330/Cys-383, Cys-359/Cys-365, Cys-377/Cys-459, Cys-415/Cys-443, Cys-486/Cys-508, Cys-497/Cys-518, Cys-503/Cys-537, Cys-531/Cys-542, Cys-565/Cys-602, Cys-569/Cys-607, and Cys-580/Cys-592. A Zn(2+)-binding site is contributed by His-399. Glu-400 is an active-site residue. Zn(2+) is bound by residues His-403 and His-409. In terms of domain architecture, Disintegrin spans 465 to 552 (NGRTYDLSPQ…VTRDMETRPV (88 aa)). The 56-residue stretch at 553–608 (DGEWGPWGPYSSCSRTCGGGIKSTARLCDRPEPRNGGRYCVGRRMKFRSCNTDSCP) folds into the TSP type-1 1 domain. Asn-714, Asn-798, and Asn-805 each carry an N-linked (GlcNAc...) asparagine glycan. Positions 721–842 (AGVFNSAHYG…FNIPIEERSN (122 aa)) are spacer. TSP type-1 domains lie at 843–901 (LFSW…MDCE), 906–962 (IIGK…GSCV), 962–1015 (VLTR…NCNE), 1017–1074 (PCPS…RACA), 1075–1131 (SWHV…APCL), 1148–1202 (RAAQ…LCFS), and 1203–1260 (PCGE…AACP). An N-linked (GlcNAc...) asparagine glycan is attached at Asn-1057. Positions 1265–1295 (RAPSSSEQPSHVPSRNVPLTHKPGENQDQGA) are disordered. The span at 1266–1277 (APSSSEQPSHVP) shows a compositional bias: polar residues. TSP type-1 domains lie at 1300 to 1351 (RGNQ…RHCG), 1354 to 1411 (PCPH…HACP), 1412 to 1465 (EDVS…KACR), 1468 to 1526 (RCPS…QDCM), 1527 to 1584 (RYQW…PHCK), 1585 to 1648 (YSVV…LRSC), and 1650 to 1706 (HVAT…NDCK). Asn-1562 carries an N-linked (GlcNAc...) asparagine glycan. The region spanning 1707–1906 (LLTTCKELQV…MATGLSIQVL (200 aa)) is the GON domain. N-linked (GlcNAc...) asparagine glycosylation is found at Asn-1719, Asn-1759, and Asn-1777.

Requires Zn(2+) as cofactor. The precursor is cleaved by a furin endopeptidase. In terms of processing, glycosylated. Can be O-fucosylated by POFUT2 on a serine or a threonine residue found within the consensus sequence C1-X(2)-(S/T)-C2-G of the TSP type-1 repeat domains where C1 and C2 are the first and second cysteine residue of the repeat, respectively. Fucosylated repeats can then be further glycosylated by the addition of a beta-1,3-glucose residue by the glucosyltransferase, B3GALTL. Fucosylation mediates the efficient secretion of ADAMTS family members. Can also be C-glycosylated with one or two mannose molecules on tryptophan residues within the consensus sequence W-X-X-W of the TPRs, and N-glycosylated. These other glycosylations can also facilitate secretion. As to expression, expressed at low level in testis and brain.

Its subcellular location is the secreted. It is found in the extracellular space. The protein localises to the extracellular matrix. In terms of biological role, may play a role in tissue-remodeling process occurring in both normal and pathological conditions. May have a protease-independent function in the transport from the endoplasmic reticulum to the Golgi apparatus of secretory cargos, mediated by the GON domain. This chain is A disintegrin and metalloproteinase with thrombospondin motifs 20 (Adamts20), found in Mus musculus (Mouse).